A 162-amino-acid chain; its full sequence is uncharacterized protein (162 aa).

A signal peptide spans 1–18 (MRKTFLTLLCVSSAIAHA).

It belongs to the fimbrial protein family.

Its function is as follows. Part of the yfcOPQRSUV fimbrial operon. Could contribute to adhesion to various surfaces in specific environmental niches. Increases adhesion to eukaryotic T24 bladder epithelial cells in the absence of fim genes. This is an uncharacterized protein from Escherichia coli (strain K12).